Here is a 426-residue protein sequence, read N- to C-terminus: MLDLKRIRNNSNEIKEALNNRGEKFDVTVIDEVLKLDEERRNILVKVEVLKSKRNQVSSEVPKLKKEGKDVSNIVAEMKNLSEEIKGFDATLAKIDEKIQYIMLRIPNIPNPQVPDGETDEDNIEIRNWLEPTKFDFEPKAHWDIGTNLNILDFQRAGKVTGSRFTFYKGLGARLERAVISYFLDTHTEKHGYIEILPPYMVNRTSMIGTGQLPKFEEDAFKISEDDYFLIPTAEVPVTNLYRDEVLKGDELPLKHVAYSACFRSEAGSAGRDTRGLVRQHQFNKVELVKFTKPEQSYDELEKLTNDAETVLKELGIPYRVVRICKGDLGFTAALKYDLEVWMPSYNRYVEISSCSNFEDFQARRANIRYKEDSKAKPQYVHTLNGSGVAIGRTVAAILENYQNEDGSVTIPEVLRPYMGGKEAIK.

L-serine is bound at residue 233 to 235 (TAE). Position 264-266 (264-266 (RSE)) interacts with ATP. Residue Glu287 coordinates L-serine. 351 to 354 (EISS) serves as a coordination point for ATP. Ser387 is a binding site for L-serine.

This sequence belongs to the class-II aminoacyl-tRNA synthetase family. Type-1 seryl-tRNA synthetase subfamily. In terms of assembly, homodimer. The tRNA molecule binds across the dimer.

The protein localises to the cytoplasm. It carries out the reaction tRNA(Ser) + L-serine + ATP = L-seryl-tRNA(Ser) + AMP + diphosphate + H(+). The catalysed reaction is tRNA(Sec) + L-serine + ATP = L-seryl-tRNA(Sec) + AMP + diphosphate + H(+). The protein operates within aminoacyl-tRNA biosynthesis; selenocysteinyl-tRNA(Sec) biosynthesis; L-seryl-tRNA(Sec) from L-serine and tRNA(Sec): step 1/1. Its function is as follows. Catalyzes the attachment of serine to tRNA(Ser). Is also able to aminoacylate tRNA(Sec) with serine, to form the misacylated tRNA L-seryl-tRNA(Sec), which will be further converted into selenocysteinyl-tRNA(Sec). This Clostridium botulinum (strain 657 / Type Ba4) protein is Serine--tRNA ligase.